A 291-amino-acid polypeptide reads, in one-letter code: Omega-amidase NIT3 (291 aa).

Residues 11 to 264 enclose the CN hydrolase domain; it reads IKVALVQLSG…EEIIYAELDP (254 aa). Thr34 bears the Phosphothreonine mark. The active-site Proton acceptor is Glu53. The active-site Proton donor is the Lys128. Cys169 functions as the Nucleophile in the catalytic mechanism.

Belongs to the carbon-nitrogen hydrolase superfamily. NIT1/NIT2 family. Homodimer.

The enzyme catalyses a monoamide of a dicarboxylate + H2O = a dicarboxylate + NH4(+). Possesses omega-amidase activity. The role of omega-amidase is to remove potentially toxic intermediates by converting 2-oxoglutaramate and 2-oxosuccinamate to biologically useful 2-oxoglutarate and oxaloacetate, respectively. The chain is Omega-amidase NIT3 (NIT3) from Saccharomyces cerevisiae (strain ATCC 204508 / S288c) (Baker's yeast).